The primary structure comprises 985 residues: UPF0182 protein cgR_0895 (985 aa).

7 consecutive transmembrane segments (helical) span residues 19-39, 63-83, 115-135, 176-196, 215-235, 262-282, and 290-310; these read VTWI…SVGF, IVLF…AGYF, VMVL…QRSW, SMML…MGGI, TQLA…YWLD, KIIL…AIFL, and LAVV…PLML. The disordered stretch occupies residues 906–944; the sequence is AQDIEEVDGTTTTPSTDETDTDTDQPATETPTAPVSEAE. Residues 929–939 show a composition bias toward low complexity; sequence DQPATETPTAP.

It belongs to the UPF0182 family.

It is found in the cell membrane. This Corynebacterium glutamicum (strain R) protein is UPF0182 protein cgR_0895.